A 134-amino-acid polypeptide reads, in one-letter code: MAKAPVNNAARRVSKKVRKNIADGVAHVHASFNNTIITITDRQGNALSWASSGGQGFKGSRKSTPFAAQVAAEVAGRAAQEQGIKNLDVKIKGPGPGRESSVRALASLGIRIASISDVTPVPHNGCRPQKRRRI.

The protein belongs to the universal ribosomal protein uS11 family. In terms of assembly, part of the 30S ribosomal subunit. Interacts with proteins S7 and S18. Binds to IF-3.

In terms of biological role, located on the platform of the 30S subunit, it bridges several disparate RNA helices of the 16S rRNA. Forms part of the Shine-Dalgarno cleft in the 70S ribosome. In Leptothrix cholodnii (strain ATCC 51168 / LMG 8142 / SP-6) (Leptothrix discophora (strain SP-6)), this protein is Small ribosomal subunit protein uS11.